We begin with the raw amino-acid sequence, 284 residues long: Isopentenyl-diphosphate Delta-isomerase II, chloroplastic (284 aa).

The transit peptide at 1-45 (MSASSLFNLPLIRLRSLALSSSFSSFRFAHRPLSSISPRKLPNFR) directs the protein to the chloroplast. Ala46 carries the post-translational modification N-acetylalanine. Lys88 serves as a coordination point for substrate. Mg(2+) contacts are provided by His92 and His104. The Nudix hydrolase domain occupies 102–254 (LLHRAFSVFL…GLKLSPWFRL (153 aa)). The substrate site is built by Arg123 and Lys127. The active site involves Cys139. Ser140 contributes to the substrate binding site. Residues 140 to 170 (SHPLYRESELIQDNALGVRNAAQRKLLDELG) carry the Nudix box motif. Glu199 and Glu201 together coordinate Mg(2+). Residue Glu201 is part of the active site.

Belongs to the IPP isomerase type 1 family. Mg(2+) serves as cofactor.

It localises to the plastid. It is found in the chloroplast. It carries out the reaction isopentenyl diphosphate = dimethylallyl diphosphate. It functions in the pathway isoprenoid biosynthesis; dimethylallyl diphosphate biosynthesis; dimethylallyl diphosphate from isopentenyl diphosphate: step 1/1. The protein operates within porphyrin-containing compound metabolism; chlorophyll biosynthesis. Functionally, catalyzes the 1,3-allylic rearrangement of the homoallylic substrate isopentenyl (IPP) to its highly electrophilic allylic isomer, dimethylallyl diphosphate (DMAPP). This Arabidopsis thaliana (Mouse-ear cress) protein is Isopentenyl-diphosphate Delta-isomerase II, chloroplastic (IPP2).